The sequence spans 813 residues: MDGVGLCANNKQKQNQMLPNKMRGEFTRNQRKDSEGLSEAPDLEFEYSDADKWTAELSELYSYTEGPEFLLNRKCFEEDFHTHLPDQKWTELDSVQRRAHAMRLLDGLEVIGRERRLKVARAILYMAQGTFGECSSELEVQHWMRYNVFLLLDVGAFTALVELLNMEIDNSAACSSAVRKPAISLADSTDLRVLLNIMYLMVETIQREEPTDSPEWRTIRETFKSELGSPLYNHEPVSVMLFGMVTKFCSGHAPHFPMKKVLLLLWKTILFTLGGFEQLQSCKISRRAALGLPPLPEDSIRVVRSMRAASPPASASDLIEQQQRRARREHKALIKQDNLDTFNEKDPYKADDSHEDEEENDDNDNSLEAEPFPLERDEVMPPPIPHPPTERMCFPKGLPWAPKVREKDIESFLESSRSKFIGYTLGNDTDTVVGLPRPIHESIKTLKQHKYVSIAEVQIAKEEAFQKTPLSGGEEELELCATELLYQGILPSLPQYMIALLKILLAAAPTSKAKTDSINILADVLPEEMPTTVLQSMKLGVDVNRHKEIIVKAISAILLLLLKHFKLNHVYQFEYMAQHLVFANCIPLILKFFNQNIMSYITAKNSISALDFPHCVIHELPELTAESLEAGDNNQFCWRNLFSCINLLRILNKLTKWKHSRTMMLVVFKSAPILKRALKVKQAMMQLYVLKLLKVQTKYLGRQWRKGNMKTMSAIYQKVRHRLNDDWAYGNDLDARPWDFQAEECALRANIERFNSRRYDKNQSNPEFLPVDNCLQSVLGQRIDLPEDFQMNYDLWLEREVFSKPISWEELLQ.

2 disordered regions span residues 1–41 (MDGV…SEAP) and 307–379 (RAAS…RDEV). Residues 9-18 (NNKQKQNQML) show a composition bias toward polar residues. Residues 22–35 (MRGEFTRNQRKDSE) show a composition bias toward basic and acidic residues. The segment covering 307 to 316 (RAASPPASAS) has biased composition (low complexity). Phosphoserine is present on Ser-310. Residues 331 to 352 (KALIKQDNLDTFNEKDPYKADD) show a composition bias toward basic and acidic residues. Positions 353–367 (SHEDEEENDDNDNSL) are enriched in acidic residues.

It belongs to the STRIP family. In terms of assembly, part of the core of STRIPAK complexes composed of PP2A catalytic and scaffolding subunits, the striatins (PP2A regulatory subunits), the striatin-associated proteins MOB4, STRIP1 and STRIP2, PDCD10 and members of the STE20 kinases, such as STK24 and STK26.

The protein localises to the cytoplasm. Functionally, plays a role in the regulation of cell morphology and cytoskeletal organization. Required in the cortical actin filament dynamics and cell shape. Part of the striatin-interacting phosphatase and kinase (STRIPAK) complexes. STRIPAK complexes have critical roles in protein (de)phosphorylation and are regulators of multiple signaling pathways including Hippo, MAPK, nuclear receptor and cytoskeleton remodeling. Different types of STRIPAK complexes are involved in a variety of biological processes such as cell growth, differentiation, apoptosis, metabolism and immune regulation. The protein is Striatin-interacting protein 1 homolog (strip1) of Danio rerio (Zebrafish).